The following is a 480-amino-acid chain: Reticulophagy regulator 1 (480 aa).

Positions 1–10 are enriched in basic and acidic residues; it reads MASPAPEEHA. The disordered stretch occupies residues 1–41; sequence MASPAPEEHATQGCPATEEQEPRPGVPGEEAGPEGAGPQVE. Residues 1-43 lie on the Cytoplasmic side of the membrane; it reads MASPAPEEHATQGCPATEEQEPRPGVPGEEAGPEGAGPQVEEA. The helical transmembrane segment at 44-64 threads the bilayer; the sequence is AGRVAAALTWLLGEPVLWLGW. Residues 65–78 lie on the Lumenal side of the membrane; sequence RADELLSWKRPLRS. Positions 67-216 are reticulon homology domain; sequence DELLSWKRPL…LLFAFLCPLF (150 aa). Residues 79 to 99 traverse the membrane as a helical segment; the sequence is LLAFLGANLLFWFLALTPWRV. Over 100-101 the chain is Cytoplasmic; that stretch reads YH. The helical transmembrane segment at 102-122 threads the bilayer; the sequence is LISVMILGRVIMQIIKDMVLS. The Lumenal portion of the chain corresponds to 123-191; the sequence is RARGAQLWRS…LVCSVCTFFT (69 aa). S132 is subject to Phosphoserine. Residue S134 is modified to Phosphoserine; by CAMK2B. S136 is subject to Phosphoserine. A helical membrane pass occupies residues 192–212; it reads ILGSYIPGVILSYLLLLFAFL. At 213–480 the chain is on the cytoplasmic side; sequence CPLFKCNDIG…GFLSNLLGGH (268 aa). The span at 302–313 shows a compositional bias: polar residues; the sequence is FNLSEGYTPQTD. The tract at residues 302 to 348 is disordered; that stretch reads FNLSEGYTPQTDTSDDLDRPSEEVFSRDLSDFPSLENGAGTNDEDEL. Residues 317–331 show a composition bias toward basic and acidic residues; sequence DLDRPSEEVFSRDLS. The short motif at 436-441 is the LIR motif element; sequence DDFELL. The disordered stretch occupies residues 450–480; that stretch reads ESELGLTQDQGAEAQQSKKSSGFLSNLLGGH. A compositionally biased stretch (polar residues) spans 454-473; the sequence is GLTQDQGAEAQQSKKSSGFL.

Belongs to the RETREG family. In terms of assembly, homooligomer; oligomerization is enhanced following endoplasmic reticulum stress and is mediated by the reticulon homology domain. Interacts with ATG8 family modifier proteins MAP1LC3A, MAP1LC3B, GABARAP, GABARAPL1 and GABARAPL2. Post-translationally, phosphorylation at Ser-134 by CAMK2B enhances oligomerization and membrane scission and reticulophagy activity.

It localises to the golgi apparatus. Its subcellular location is the cis-Golgi network membrane. The protein localises to the endoplasmic reticulum membrane. Its function is as follows. Endoplasmic reticulum (ER)-anchored autophagy regulator which mediates ER delivery into lysosomes through sequestration into autophagosomes. Promotes membrane remodeling and ER scission via its membrane bending capacity and targets the fragments into autophagosomes via interaction with ATG8 family proteins. Active under basal conditions. Required for collagen quality control in a LIR motif-dependent manner. Required for long-term survival of nociceptive and autonomic ganglion neurons. The chain is Reticulophagy regulator 1 from Rattus norvegicus (Rat).